A 536-amino-acid polypeptide reads, in one-letter code: Bifunctional purine biosynthesis protein PurH (536 aa).

Residues 8-158 form the MGS-like domain; sequence IPAPDEVRIK…KNHAYVTVVT (151 aa).

Belongs to the PurH family.

The catalysed reaction is (6R)-10-formyltetrahydrofolate + 5-amino-1-(5-phospho-beta-D-ribosyl)imidazole-4-carboxamide = 5-formamido-1-(5-phospho-D-ribosyl)imidazole-4-carboxamide + (6S)-5,6,7,8-tetrahydrofolate. The enzyme catalyses IMP + H2O = 5-formamido-1-(5-phospho-D-ribosyl)imidazole-4-carboxamide. The protein operates within purine metabolism; IMP biosynthesis via de novo pathway; 5-formamido-1-(5-phospho-D-ribosyl)imidazole-4-carboxamide from 5-amino-1-(5-phospho-D-ribosyl)imidazole-4-carboxamide (10-formyl THF route): step 1/1. Its pathway is purine metabolism; IMP biosynthesis via de novo pathway; IMP from 5-formamido-1-(5-phospho-D-ribosyl)imidazole-4-carboxamide: step 1/1. This chain is Bifunctional purine biosynthesis protein PurH, found in Sinorhizobium medicae (strain WSM419) (Ensifer medicae).